The primary structure comprises 946 residues: Increased sodium tolerance protein 2 (946 aa).

Topologically, residues 1 to 121 (MSQTITSLDP…SNLTNNPKQS (121 aa)) are cytoplasmic. The helical transmembrane segment at 122 to 142 (LYFAFLQNYIKWLIPFSFFGL) threads the bilayer. Residues 143 to 153 (SIRFLSNFTYE) lie on the Extracellular side of the membrane. A helical membrane pass occupies residues 154 to 174 (FNSTYSLFAILWTLSFTAFWL). Topologically, residues 175 to 217 (YKYEPFWSDRLSKYSSFSTIEFLQDKQKAQKKASSVIMLKKCC) are cytoplasmic. Residues 218-238 (FIPVALLFGAILLSFQLYCFA) traverse the membrane as a helical segment. Residues 239–253 (LEIFIKQIYNGPMIS) lie on the Extracellular side of the membrane. Residues 254–274 (ILSFLPTILICTFTPVLTVIY) traverse the membrane as a helical segment. Over 275 to 302 (NKYFVEPMTKWENHSSVVNAKKSKEAKN) the chain is Cytoplasmic. Residues 303-323 (FVIIFLSSYVPLLITLFLYLP) traverse the membrane as a helical segment. At 324 to 447 (MGHLLTAEIR…DANFKKLLLQ (124 aa)) the chain is on the extracellular side. A helical transmembrane segment spans residues 448-468 (FGYLVMFSTIWPLAPFICLIV). The Cytoplasmic portion of the chain corresponds to 469–505 (NLIVYQVDLRKAVLYSKPEYFPFPIYDKPSSVSNTQK). The chain crosses the membrane as a helical span at residues 506 to 526 (LTVGLWNSVLVMFSILGCVIT). Residues 527-563 (ATLTYMYQSCNIPGVGAHTSIHTNKAWYLANPINHSW) lie on the Extracellular side of the membrane. Residues 564-584 (INIVLYAVFIEHVSVAIFFLF) traverse the membrane as a helical segment. Residues 585 to 946 (SSILKSSHDD…GLLHKLKKKL (362 aa)) are Cytoplasmic-facing. 2 disordered regions span residues 617–638 (EKIP…RKGS) and 665–718 (THAN…TEKR). A compositionally biased stretch (basic and acidic residues) spans 628-638 (NEKELVQRKGS). The residue at position 638 (serine 638) is a Phosphoserine. Low complexity predominate over residues 671–689 (PSSLSSASSPSLSSSSSSS). A Phosphothreonine modification is found at threonine 701. Phosphoserine occurs at positions 704 and 720. Position 726 is a phosphothreonine (threonine 726). Residue serine 729 is modified to Phosphoserine. A Phosphotyrosine modification is found at tyrosine 730. Residue serine 757 is modified to Phosphoserine. The tract at residues 759-784 (RDAKSSAESSNATNNNTLGTESKLLP) is disordered. A compositionally biased stretch (low complexity) spans 764 to 775 (SAESSNATNNNT). Phosphoserine occurs at positions 793, 844, and 847. A disordered region spans residues 846 to 946 (VSVATEQTKK…GLLHKLKKKL (101 aa)). The residue at position 850 (threonine 850) is a Phosphothreonine. Over residues 859 to 868 (STKNGPSRSI) the composition is skewed to polar residues. Over residues 884–893 (TTTTTTTDAT) the composition is skewed to low complexity. The segment covering 895 to 905 (PHHHHHHHRHR) has biased composition (basic residues). Over residues 916-927 (SKTTESSSSSSA) the composition is skewed to low complexity. Basic residues predominate over residues 931 to 946 (KPKHKKGLLHKLKKKL).

As to quaternary structure, interacts with BTN2.

The protein resides in the cell membrane. Functionally, may be involved in ion homeostasis together with BTN1 or BTN2. The protein is Increased sodium tolerance protein 2 (IST2) of Saccharomyces cerevisiae (strain ATCC 204508 / S288c) (Baker's yeast).